The chain runs to 552 residues: 5'-AMP-activated protein kinase catalytic subunit alpha-2 (552 aa).

The Protein kinase domain occupies 16–268 (YVLGDTLGVG…IKDIREHEWF (253 aa)). ATP is bound by residues 22–30 (LGVGTFGKV) and Lys45. The Proton acceptor role is filled by Asp139. Position 172 is a phosphothreonine; by LKB1 and CaMKK2 (Thr172). Thr258 is modified (phosphothreonine). Residues 291-376 (EAVKEVCEKF…PERMPPLIAD (86 aa)) form an AIS region. Phosphoserine occurs at positions 377 and 491.

Belongs to the protein kinase superfamily. CAMK Ser/Thr protein kinase family. SNF1 subfamily. AMPK is a heterotrimer of an alpha catalytic subunit (PRKAA1 or PRKAA2), a beta (PRKAB1 or PRKAB2) and a gamma non-catalytic subunits (PRKAG1, PRKAG2 or PRKAG3). Interacts with FNIP1 and FNIP2. Interacts with DUSP29. Interacts with ARF6. The phosphorylated form at Thr-172 mediated by CamKK2 interacts with ACSS2. Mg(2+) is required as a cofactor. In terms of processing, ubiquitinated. Post-translationally, phosphorylated at Thr-172 by STK11/LKB1 in complex with STE20-related adapter-alpha (STRADA) pseudo kinase and CAB39. Also phosphorylated at Thr-172 by CAMKK2; triggered by a rise in intracellular calcium ions, without detectable changes in the AMP/ATP ratio. CAMKK1 can also phosphorylate Thr-172, but at much lower level. Dephosphorylated by protein phosphatase 2A and 2C (PP2A and PP2C). Phosphorylated by ULK1; leading to negatively regulate AMPK activity and suggesting the existence of a regulatory feedback loop between ULK1 and AMPK. Dephosphorylated by PPM1A and PPM1B at Thr-172 (mediated by STK11/LKB1).

Its subcellular location is the cytoplasm. It localises to the nucleus. It carries out the reaction L-seryl-[protein] + ATP = O-phospho-L-seryl-[protein] + ADP + H(+). The enzyme catalyses L-threonyl-[protein] + ATP = O-phospho-L-threonyl-[protein] + ADP + H(+). The catalysed reaction is L-seryl-[acetyl-CoA carboxylase] + ATP = O-phospho-L-seryl-[acetyl-CoA carboxylase] + ADP + H(+). It catalyses the reaction L-seryl-[3-hydroxy-3-methylglutaryl-coenzyme A reductase] + ATP = O-phospho-L-seryl-[3-hydroxy-3-methylglutaryl-coenzyme A reductase] + ADP + H(+). Activated by phosphorylation on Thr-172. Binding of AMP to non-catalytic gamma subunit (PRKAG1, PRKAG2 or PRKAG3) results in allosteric activation, inducing phosphorylation on Thr-172. AMP-binding to gamma subunit also sustains activity by preventing dephosphorylation of Thr-172. ADP also stimulates Thr-172 phosphorylation, without stimulating already phosphorylated AMPK. ATP promotes dephosphorylation of Thr-172, rendering the enzyme inactive. Under physiological conditions AMPK mainly exists in its inactive form in complex with ATP, which is much more abundant than AMP. Selectively inhibited by compound C (6-[4-(2-Piperidin-1-yl-ethoxy)-phenyl)]-3-pyridin-4-yl-pyyrazolo[1,5-a] pyrimidine. Activated by resveratrol, a natural polyphenol present in red wine, and S17834, a synthetic polyphenol. Salicylate/aspirin directly activates kinase activity, primarily by inhibiting Thr-172 dephosphorylation. In terms of biological role, catalytic subunit of AMP-activated protein kinase (AMPK), an energy sensor protein kinase that plays a key role in regulating cellular energy metabolism. In response to reduction of intracellular ATP levels, AMPK activates energy-producing pathways and inhibits energy-consuming processes: inhibits protein, carbohydrate and lipid biosynthesis, as well as cell growth and proliferation. AMPK acts via direct phosphorylation of metabolic enzymes, and by longer-term effects via phosphorylation of transcription regulators. Regulates lipid synthesis by phosphorylating and inactivating lipid metabolic enzymes such as ACACA, ACACB, GYS1, HMGCR and LIPE; regulates fatty acid and cholesterol synthesis by phosphorylating acetyl-CoA carboxylase (ACACA and ACACB) and hormone-sensitive lipase (LIPE) enzymes, respectively. Promotes lipolysis of lipid droplets by mediating phosphorylation of isoform 1 of CHKA (CHKalpha2). Regulates insulin-signaling and glycolysis by phosphorylating IRS1, PFKFB2 and PFKFB3. Involved in insulin receptor/INSR internalization. AMPK stimulates glucose uptake in muscle by increasing the translocation of the glucose transporter SLC2A4/GLUT4 to the plasma membrane, possibly by mediating phosphorylation of TBC1D4/AS160. Regulates transcription and chromatin structure by phosphorylating transcription regulators involved in energy metabolism such as CRTC2/TORC2, FOXO3, histone H2B, HDAC5, MEF2C, MLXIPL/ChREBP, EP300, HNF4A, p53/TP53, SREBF1, SREBF2 and PPARGC1A. Acts as a key regulator of glucose homeostasis in liver by phosphorylating CRTC2/TORC2, leading to CRTC2/TORC2 sequestration in the cytoplasm. In response to stress, phosphorylates 'Ser-36' of histone H2B (H2BS36ph), leading to promote transcription. Acts as a key regulator of cell growth and proliferation by phosphorylating FNIP1, TSC2, RPTOR, WDR24 and ATG1/ULK1: in response to nutrient limitation, negatively regulates the mTORC1 complex by phosphorylating RPTOR component of the mTORC1 complex and by phosphorylating and activating TSC2. Also phosphorylates and inhibits GATOR2 subunit WDR24 in response to nutrient limitation, leading to suppress glucose-mediated mTORC1 activation. In response to energetic stress, phosphorylates FNIP1, inactivating the non-canonical mTORC1 signaling, thereby promoting nuclear translocation of TFEB and TFE3, and inducing transcription of lysosomal or autophagy genes. In response to nutrient limitation, promotes autophagy by phosphorylating and activating ATG1/ULK1. In that process, it also activates WDR45/WIPI4. Phosphorylates CASP6, thereby preventing its autoprocessing and subsequent activation. AMPK also acts as a regulator of circadian rhythm by mediating phosphorylation of CRY1, leading to destabilize it. May regulate the Wnt signaling pathway by phosphorylating CTNNB1, leading to stabilize it. Also acts as a regulator of cellular polarity by remodeling the actin cytoskeleton; probably by indirectly activating myosin. Also phosphorylates CFTR, EEF2K, KLC1, NOS3 and SLC12A1. Plays an important role in the differential regulation of pro-autophagy (composed of PIK3C3, BECN1, PIK3R4 and UVRAG or ATG14) and non-autophagy (composed of PIK3C3, BECN1 and PIK3R4) complexes, in response to glucose starvation. Can inhibit the non-autophagy complex by phosphorylating PIK3C3 and can activate the pro-autophagy complex by phosphorylating BECN1. Upon glucose starvation, promotes ARF6 activation in a kinase-independent manner leading to cell migration. Upon glucose deprivation mediates the phosphorylation of ACSS2 at 'Ser-659', which exposes the nuclear localization signal of ACSS2, required for its interaction with KPNA1 and nuclear translocation. Upon stress, regulates mitochondrial fragmentation through phosphorylation of MTFR1L. This chain is 5'-AMP-activated protein kinase catalytic subunit alpha-2, found in Mus musculus (Mouse).